Reading from the N-terminus, the 1096-residue chain is Cohesin subunit scc-3 (1096 aa).

The span at Met1–Val21 shows a compositional bias: polar residues. Disordered regions lie at residues Met1–Ala53 and Asn67–Glu106. A coiled-coil region spans residues Ile261–Ile312. The SCD domain occupies Phe320–Met405. Positions Asp1057–Phe1096 are disordered. Residues Ser1060–Met1073 show a composition bias toward polar residues.

It belongs to the SCC3 family. In terms of assembly, component of the cohesin complex, composed of the smc-1 and smc-3 heterodimer attached via their hinge domain, scc-1 which links them, and scc-3. Interacts with scc-1, smc-1 and tim-1. Expressed in gonadal cells.

It localises to the nucleus. It is found in the chromosome. Component of the cohesin complex, a complex required for the cohesion of sister chromatids after DNA replication. The cohesin complex apparently forms a large proteinaceous ring within which sister chromatids can be trapped. At anaphase, the scc-1 subunit of the complex is cleaved and dissociates from chromatin, allowing sister chromatids to segregate. The cohesin complex may also play a role in spindle pole assembly during mitosis. Plays an essential role in cell division during embryonic development. Required for the assembly of the synaptonemal complex between homologous chromosomes to promote sister chromatid cohesion during mitosis and meiosis. Has a role in stabilization of homologous chromosome associations during meiotic synapsis. Required for chromosome segregation during mitosis and meiosis. Plays a role in DNA double-strand break (DSB) repair during meiotic recombination and promotes the assembly of the 9-1-1 cell-cycle checkpoint response complex which is required for inducing apoptosis in response to DNA damage, at DNA damage sites. The chain is Cohesin subunit scc-3 from Caenorhabditis elegans.